The primary structure comprises 333 residues: Adenosine deaminase (333 aa).

Positions 12 and 14 each coordinate Zn(2+). The substrate site is built by His-14, Asp-16, and Gly-170. His-197 is a Zn(2+) binding site. Glu-200 serves as the catalytic Proton donor. Asp-278 is a binding site for Zn(2+). Asp-279 serves as a coordination point for substrate.

It belongs to the metallo-dependent hydrolases superfamily. Adenosine and AMP deaminases family. Adenosine deaminase subfamily. Requires Zn(2+) as cofactor.

The catalysed reaction is adenosine + H2O + H(+) = inosine + NH4(+). It carries out the reaction 2'-deoxyadenosine + H2O + H(+) = 2'-deoxyinosine + NH4(+). Functionally, catalyzes the hydrolytic deamination of adenosine and 2-deoxyadenosine. This chain is Adenosine deaminase, found in Photorhabdus laumondii subsp. laumondii (strain DSM 15139 / CIP 105565 / TT01) (Photorhabdus luminescens subsp. laumondii).